Consider the following 555-residue polypeptide: 1,3-beta-glucanosyltransferase GAS2 (555 aa).

Positions 1–24 (MNKKQNFYAAIIVAIFLCLQLSHG) are cleaved as a signal peptide. Residues Cys-89 and Cys-118 are joined by a disulfide bond. Residues Tyr-107, 134–142 (SEPDISINR), Asn-175, Glu-176, Asp-217, and Arg-222 contribute to the (1,3-beta-D-glucosyl)n site. Glu-176 (proton donor) is an active-site residue. Cystine bridges form between Cys-231–Cys-367, Cys-247–Cys-278, Cys-390–Cys-442, Cys-392–Cys-489, Cys-399–Cys-466, and Cys-419–Cys-424. Residue Glu-275 is the Nucleophile of the active site. Tyr-307 provides a ligand contact to (1,3-beta-D-glucosyl)n. Asn-498 carries N-linked (GlcNAc...) asparagine glycosylation. Asp-531 is lipidated: GPI-anchor amidated aspartate. Positions 532–555 (GTIAFKTSGFVILLISMIAAGILL) are cleaved as a propeptide — removed in mature form.

The protein belongs to the glycosyl hydrolase 72 family. In terms of processing, N-glycosylated.

The protein localises to the cell membrane. Its function is as follows. Splits internally a 1,3-beta-glucan molecule and transfers the newly generated reducing end (the donor) to the non-reducing end of another 1,3-beta-glucan molecule (the acceptor) forming a 1,3-beta linkage, resulting in the elongation of 1,3-beta-glucan chains in the cell wall. Involved in spore wall assembly. In Saccharomyces cerevisiae (strain ATCC 204508 / S288c) (Baker's yeast), this protein is 1,3-beta-glucanosyltransferase GAS2 (GAS2).